Here is a 332-residue protein sequence, read N- to C-terminus: Nucleotide-binding protein RC1_2868 (332 aa).

The segment at 1 to 27 (MTGQPLTMETAAGADAGTGAATHPADG) is disordered. The segment covering 10 to 22 (TAAGADAGTGAAT) has biased composition (low complexity). 36 to 43 (GMSGGGLS) contacts ATP. 82–85 (DSRT) lines the GTP pocket. Basic and acidic residues-rich tracts occupy residues 302–312 (GHRDLDRRHPA) and 322–332 (VASRETPEEHR). Positions 302–332 (GHRDLDRRHPAPEPAPPWREVASRETPEEHR) are disordered.

It belongs to the RapZ-like family.

Its function is as follows. Displays ATPase and GTPase activities. The polypeptide is Nucleotide-binding protein RC1_2868 (Rhodospirillum centenum (strain ATCC 51521 / SW)).